A 210-amino-acid polypeptide reads, in one-letter code: Small ribosomal subunit protein uS3 (210 aa).

Positions 38–106 constitute a KH type-2 domain; the sequence is LRSFLKKRLY…EVYLNIQEVR (69 aa).

This sequence belongs to the universal ribosomal protein uS3 family. As to quaternary structure, part of the 30S ribosomal subunit. Forms a tight complex with proteins S10 and S14.

Its function is as follows. Binds the lower part of the 30S subunit head. Binds mRNA in the 70S ribosome, positioning it for translation. This Geotalea uraniireducens (strain Rf4) (Geobacter uraniireducens) protein is Small ribosomal subunit protein uS3.